Reading from the N-terminus, the 486-residue chain is Bifunctional protein GlmU (486 aa).

The pyrophosphorylase stretch occupies residues 1–241 (MSASDSSSAV…ARELAGVNDR (241 aa)). UDP-N-acetyl-alpha-D-glucosamine is bound by residues 13–16 (LAAG), Lys-27, Gln-84, and 89–90 (GT). Asp-114 contributes to the Mg(2+) binding site. Gly-151, Glu-166, Asn-181, and Asn-239 together coordinate UDP-N-acetyl-alpha-D-glucosamine. Position 239 (Asn-239) interacts with Mg(2+). A linker region spans residues 242-262 (VQLAEAGAELNRRTVEAAMRG). The tract at residues 263–486 (GATIVDPATT…AQNSVPNQEG (224 aa)) is N-acetyltransferase. Residues Arg-344 and Lys-362 each coordinate UDP-N-acetyl-alpha-D-glucosamine. His-374 functions as the Proton acceptor in the catalytic mechanism. UDP-N-acetyl-alpha-D-glucosamine contacts are provided by Tyr-377 and Asn-388. Acetyl-CoA-binding positions include Ala-391, 397 to 398 (NY), Ser-416, and Ala-434. The disordered stretch occupies residues 464 to 486 (KRPGTAAADAAAAAQNSVPNQEG).

It in the N-terminal section; belongs to the N-acetylglucosamine-1-phosphate uridyltransferase family. This sequence in the C-terminal section; belongs to the transferase hexapeptide repeat family. Homotrimer. Requires Mg(2+) as cofactor.

It is found in the cytoplasm. The catalysed reaction is alpha-D-glucosamine 1-phosphate + acetyl-CoA = N-acetyl-alpha-D-glucosamine 1-phosphate + CoA + H(+). It catalyses the reaction N-acetyl-alpha-D-glucosamine 1-phosphate + UTP + H(+) = UDP-N-acetyl-alpha-D-glucosamine + diphosphate. Its pathway is nucleotide-sugar biosynthesis; UDP-N-acetyl-alpha-D-glucosamine biosynthesis; N-acetyl-alpha-D-glucosamine 1-phosphate from alpha-D-glucosamine 6-phosphate (route II): step 2/2. It functions in the pathway nucleotide-sugar biosynthesis; UDP-N-acetyl-alpha-D-glucosamine biosynthesis; UDP-N-acetyl-alpha-D-glucosamine from N-acetyl-alpha-D-glucosamine 1-phosphate: step 1/1. The protein operates within bacterial outer membrane biogenesis; LPS lipid A biosynthesis. Its function is as follows. Catalyzes the last two sequential reactions in the de novo biosynthetic pathway for UDP-N-acetylglucosamine (UDP-GlcNAc). The C-terminal domain catalyzes the transfer of acetyl group from acetyl coenzyme A to glucosamine-1-phosphate (GlcN-1-P) to produce N-acetylglucosamine-1-phosphate (GlcNAc-1-P), which is converted into UDP-GlcNAc by the transfer of uridine 5-monophosphate (from uridine 5-triphosphate), a reaction catalyzed by the N-terminal domain. The protein is Bifunctional protein GlmU of Corynebacterium efficiens (strain DSM 44549 / YS-314 / AJ 12310 / JCM 11189 / NBRC 100395).